Consider the following 628-residue polypeptide: Modular serine protease (628 aa).

The first 25 residues, 1 to 25 (MQLISFLSNPLFFCALLLKFRTIFA), serve as a signal peptide directing secretion. LDL-receptor class A domains are found at residues 26-64 (ACDS…LTCV), 69-107 (HCTK…LRCG), 122-163 (NCKE…ELCG), and 166-204 (ECPA…LLCN). Intrachain disulfides connect cysteine 27–cysteine 39, cysteine 34–cysteine 52, cysteine 46–cysteine 63, cysteine 70–cysteine 82, cysteine 77–cysteine 95, cysteine 89–cysteine 106, cysteine 123–cysteine 135, cysteine 130–cysteine 149, cysteine 143–cysteine 162, cysteine 167–cysteine 179, cysteine 174–cysteine 192, and cysteine 186–cysteine 203. Asparagine 36 carries an N-linked (GlcNAc...) asparagine glycan. The N-linked (GlcNAc...) asparagine glycan is linked to asparagine 204. 2 consecutive Sushi domains span residues 222 to 285 (LGCP…KCVK) and 300 to 356 (ALCT…RCEQ). 4 disulfides stabilise this stretch: cysteine 224–cysteine 270, cysteine 256–cysteine 283, cysteine 302–cysteine 341, and cysteine 326–cysteine 354. In terms of domain architecture, Peptidase S1 spans 369–621 (SSGGYTINNT…FEDMILNAMN (253 aa)). N-linked (GlcNAc...) asparagine glycosylation occurs at asparagine 376. Residues cysteine 399 and cysteine 415 are joined by a disulfide bond. Residues histidine 414, aspartate 472, and serine 563 each act as charge relay system in the active site. N-linked (GlcNAc...) asparagine glycosylation occurs at asparagine 621.

Belongs to the peptidase S1 family. May be proteolytically cleaved via an autocatalytic mechanism.

Its subcellular location is the secreted. Its function is as follows. Serine protease that plays a key role in innate immunity by activating the Toll pathway in response to infection with Gram-positive bacteria and fungi. During Gram-positive infection, acts downstream of PGRP-SA and upstream of Grass and Spz, and therefore appears to function in a pathway that links detection of Gram-positive lysine-type peptidoglycans to Toll activation. Functions in a separate pathway to the psh-mediated activation of the Toll pathway. This chain is Modular serine protease, found in Drosophila melanogaster (Fruit fly).